A 415-amino-acid polypeptide reads, in one-letter code: Gamma-glutamyl phosphate reductase (415 aa).

It belongs to the gamma-glutamyl phosphate reductase family.

The protein localises to the cytoplasm. The catalysed reaction is L-glutamate 5-semialdehyde + phosphate + NADP(+) = L-glutamyl 5-phosphate + NADPH + H(+). It participates in amino-acid biosynthesis; L-proline biosynthesis; L-glutamate 5-semialdehyde from L-glutamate: step 2/2. Catalyzes the NADPH-dependent reduction of L-glutamate 5-phosphate into L-glutamate 5-semialdehyde and phosphate. The product spontaneously undergoes cyclization to form 1-pyrroline-5-carboxylate. The chain is Gamma-glutamyl phosphate reductase from Listeria monocytogenes serovar 1/2a (strain ATCC BAA-679 / EGD-e).